A 179-amino-acid chain; its full sequence is MARLREFYKETVVPELVKQFGYKSVMEVPRIEKITLNMGVGEAVADKKVMEHAVSDLEKIAGQKPVVTVARKSIAGFKIRDNYPVGCKVTLRRDQMFEFLDRLITIALPRVRDFRGVSGKSFDGRGNYNMGVREQIIFPEIEYDKIDALRGLNITITTTAKTDEEAKALLSLFKFPFKG.

Belongs to the universal ribosomal protein uL5 family. Part of the 50S ribosomal subunit; part of the 5S rRNA/L5/L18/L25 subcomplex. Contacts the 5S rRNA and the P site tRNA. Forms a bridge to the 30S subunit in the 70S ribosome.

Functionally, this is one of the proteins that bind and probably mediate the attachment of the 5S RNA into the large ribosomal subunit, where it forms part of the central protuberance. In the 70S ribosome it contacts protein S13 of the 30S subunit (bridge B1b), connecting the 2 subunits; this bridge is implicated in subunit movement. Contacts the P site tRNA; the 5S rRNA and some of its associated proteins might help stabilize positioning of ribosome-bound tRNAs. This Neisseria meningitidis serogroup C (strain 053442) protein is Large ribosomal subunit protein uL5.